We begin with the raw amino-acid sequence, 388 residues long: Succinyl-diaminopimelate desuccinylase (388 aa).

His-84 is a Zn(2+) binding site. Asp-86 is an active-site residue. Asp-115 provides a ligand contact to Zn(2+). Residue Glu-146 is the Proton acceptor of the active site. Glu-147, Glu-175, and His-360 together coordinate Zn(2+).

Belongs to the peptidase M20A family. DapE subfamily. In terms of assembly, homodimer. Requires Zn(2+) as cofactor. The cofactor is Co(2+).

It catalyses the reaction N-succinyl-(2S,6S)-2,6-diaminopimelate + H2O = (2S,6S)-2,6-diaminopimelate + succinate. It participates in amino-acid biosynthesis; L-lysine biosynthesis via DAP pathway; LL-2,6-diaminopimelate from (S)-tetrahydrodipicolinate (succinylase route): step 3/3. In terms of biological role, catalyzes the hydrolysis of N-succinyl-L,L-diaminopimelic acid (SDAP), forming succinate and LL-2,6-diaminopimelate (DAP), an intermediate involved in the bacterial biosynthesis of lysine and meso-diaminopimelic acid, an essential component of bacterial cell walls. The chain is Succinyl-diaminopimelate desuccinylase from Helicobacter pylori (strain J99 / ATCC 700824) (Campylobacter pylori J99).